We begin with the raw amino-acid sequence, 166 residues long: MTEPSSRRSGYARLLDRAIRILAMRDHSEQELRRKLVAPVMSKNGPEALDVTPDELEQVVAWCIENRYLDDNRFVGQFIASRSRKGYGPARIRQELSQKGIARQVVDQAMRECDIDWVSLAREQAQRKYGEPLPSAFTEKVKVQRFLLYRGYLMEDIQEIWRNFAD.

This sequence belongs to the RecX family.

The protein localises to the cytoplasm. Functionally, modulates RecA activity. In Klebsiella pneumoniae subsp. pneumoniae (strain ATCC 700721 / MGH 78578), this protein is Regulatory protein RecX.